The chain runs to 69 residues: Disintegrin EMF10A (69 aa).

In terms of domain architecture, Disintegrin spans 1-66 (MNSANPCCDP…DCPRNPWKSE (66 aa)). Intrachain disulfides connect cysteine 7/cysteine 30, cysteine 21/cysteine 27, cysteine 26/cysteine 51, and cysteine 39/cysteine 58. The short motif at 43–45 (RGD) is the Cell attachment site element.

The protein belongs to the disintegrin family. Dimeric disintegrin subfamily. As to quaternary structure, heterodimer with EMF10B; disulfide-linked. In terms of tissue distribution, expressed by the venom gland.

The protein localises to the secreted. Extremely potent and selective inhibitor of integrin alpha-5/beta-1 (ITGA5/ITGB1). Partially inhibits adhesion of cells expressing alpha-IIb/beta-3 (ITGA2B/ITGB3), alpha-V/beta-3 (ITGAV/ITGB3), and alpha-4/beta-1 (ITGA4/ITGB1) to appropriate ligands only at concentration higher than 500 nM. Weakly inhibits ADP-induced platelet aggregation. In Eristicophis macmahoni (Leaf-nosed viper), this protein is Disintegrin EMF10A.